The primary structure comprises 249 residues: MADTSSETVDFGFSTVPRGEKRHKVREVFDSVAGRYDIMNDLMSLGVHRLWKREFVAMMDPRPHRTLLDLAGGTGDISLRWLAAGGGPVLMTDINEAMLRVGRGRAEEQARIEGIGFAVADAEALPLRDSCVDRVSIAFGLRNCTDKDRVLAEARRVLKPGGRFFCLEFSRLQVAAAQPLYEKWSFVALPAIGARVAQDRESYQYLAESIRMFPDQETLAGMMRRAGFERVSYRNLSGGIAAIHSGWRL.

Residues Thr-74, Asp-93, and Asp-121–Ala-122 contribute to the S-adenosyl-L-methionine site.

The protein belongs to the class I-like SAM-binding methyltransferase superfamily. MenG/UbiE family.

It catalyses the reaction a 2-demethylmenaquinol + S-adenosyl-L-methionine = a menaquinol + S-adenosyl-L-homocysteine + H(+). The enzyme catalyses a 2-methoxy-6-(all-trans-polyprenyl)benzene-1,4-diol + S-adenosyl-L-methionine = a 5-methoxy-2-methyl-3-(all-trans-polyprenyl)benzene-1,4-diol + S-adenosyl-L-homocysteine + H(+). It participates in quinol/quinone metabolism; menaquinone biosynthesis; menaquinol from 1,4-dihydroxy-2-naphthoate: step 2/2. The protein operates within cofactor biosynthesis; ubiquinone biosynthesis. Functionally, methyltransferase required for the conversion of demethylmenaquinol (DMKH2) to menaquinol (MKH2) and the conversion of 2-polyprenyl-6-methoxy-1,4-benzoquinol (DDMQH2) to 2-polyprenyl-3-methyl-6-methoxy-1,4-benzoquinol (DMQH2). This is Ubiquinone/menaquinone biosynthesis C-methyltransferase UbiE from Acidiphilium cryptum (strain JF-5).